The chain runs to 266 residues: Glucosamine-6-phosphate deaminase (266 aa).

Aspartate 72 (proton acceptor; for enolization step) is an active-site residue. Aspartate 141 acts as the For ring-opening step in catalysis. Histidine 143 serves as the catalytic Proton acceptor; for ring-opening step. Glutamate 148 serves as the catalytic For ring-opening step.

The protein belongs to the glucosamine/galactosamine-6-phosphate isomerase family. NagB subfamily. In terms of assembly, homohexamer.

The catalysed reaction is alpha-D-glucosamine 6-phosphate + H2O = beta-D-fructose 6-phosphate + NH4(+). It participates in amino-sugar metabolism; N-acetylneuraminate degradation; D-fructose 6-phosphate from N-acetylneuraminate: step 5/5. With respect to regulation, allosterically activated by N-acetylglucosamine 6-phosphate (GlcNAc6P). Its function is as follows. Catalyzes the reversible isomerization-deamination of glucosamine 6-phosphate (GlcN6P) to form fructose 6-phosphate (Fru6P) and ammonium ion. This is Glucosamine-6-phosphate deaminase from Serratia proteamaculans (strain 568).